The chain runs to 854 residues: Protein translocase subunit SecA (854 aa).

ATP contacts are provided by residues glutamine 89, glycine 107–threonine 111, and aspartate 501.

The protein belongs to the SecA family. Monomer and homodimer. Part of the essential Sec protein translocation apparatus which comprises SecA, SecYEG and auxiliary proteins SecDF-YajC and YidC.

The protein localises to the cell inner membrane. Its subcellular location is the cytoplasm. The catalysed reaction is ATP + H2O + cellular proteinSide 1 = ADP + phosphate + cellular proteinSide 2.. In terms of biological role, part of the Sec protein translocase complex. Interacts with the SecYEG preprotein conducting channel. Has a central role in coupling the hydrolysis of ATP to the transfer of proteins into and across the cell membrane, serving both as a receptor for the preprotein-SecB complex and as an ATP-driven molecular motor driving the stepwise translocation of polypeptide chains across the membrane. This Pelagibacter ubique (strain HTCC1062) protein is Protein translocase subunit SecA.